Here is a 62-residue protein sequence, read N- to C-terminus: Large ribosomal subunit protein uL15 (62 aa).

This sequence belongs to the universal ribosomal protein uL15 family.

This chain is Large ribosomal subunit protein uL15 (RPL28), found in Candida albicans (Yeast).